Reading from the N-terminus, the 333-residue chain is Putative pectinesterase 14 (333 aa).

Residues 1–16 (MLFFILFLSIISPIES) form the signal peptide. 2 N-linked (GlcNAc...) asparagine glycosylation sites follow: asparagine 108 and asparagine 114. Substrate is bound at residue threonine 116. An N-linked (GlcNAc...) asparagine glycan is attached at asparagine 133. Position 151 (glutamine 151) interacts with substrate. Residue aspartate 174 is the Proton donor of the active site. Residue aspartate 195 is the Nucleophile of the active site. Arginine 253 serves as a coordination point for substrate. Residues asparagine 302 and asparagine 323 are each glycosylated (N-linked (GlcNAc...) asparagine).

The protein belongs to the pectinesterase family. Expressed in flower buds.

The protein localises to the secreted. Its subcellular location is the cell wall. The catalysed reaction is [(1-&gt;4)-alpha-D-galacturonosyl methyl ester](n) + n H2O = [(1-&gt;4)-alpha-D-galacturonosyl](n) + n methanol + n H(+). The protein operates within glycan metabolism; pectin degradation; 2-dehydro-3-deoxy-D-gluconate from pectin: step 1/5. In terms of biological role, acts in the modification of cell walls via demethylesterification of cell wall pectin. The chain is Putative pectinesterase 14 (PME14) from Arabidopsis thaliana (Mouse-ear cress).